Here is a 719-residue protein sequence, read N- to C-terminus: Protein ENHANCED DISEASE RESISTANCE 2-like (719 aa).

Residues 3 to 110 (KVVYEGWMVR…WKEKIECVID (108 aa)) form the PH domain. The tract at residues 134 to 173 (AGRTASSSDHESPFSALEDENDSQRDLLRRTTIGNGPPES) is disordered. One can recognise an START domain in the interval 180–392 (EFDAELSNQS…VSGLREWFSQ (213 aa)). Residues 414–478 (ALGKGGKHHH…ETDAKKTEEP (65 aa)) form a disordered region. Positions 426-439 (SLSIDQTNGASRNS) are enriched in polar residues. Residues 442–461 (MDEDSDDDDEFQIPDSEPEP) are compositionally biased toward acidic residues. Residues 462 to 477 (ETSKQDQETDAKKTEE) show a composition bias toward basic and acidic residues. Residues 665-685 (GVLGLVIGVITSLVVEMAFLV) form a helical membrane-spanning segment.

The protein resides in the endoplasmic reticulum membrane. It localises to the cell membrane. Its subcellular location is the endosome membrane. Binds to phosphatidylinositol-4-phosphate (PtdIns(4)P). May regulate the salicylic acid- (SA-) mediated resistance to pathogens. The protein is Protein ENHANCED DISEASE RESISTANCE 2-like (EDR2L) of Arabidopsis thaliana (Mouse-ear cress).